Here is a 155-residue protein sequence, read N- to C-terminus: Ribosomal RNA large subunit methyltransferase H (155 aa).

Residues leucine 73, glycine 104, and 123–128 (LSRMTF) contribute to the S-adenosyl-L-methionine site.

Belongs to the RNA methyltransferase RlmH family. As to quaternary structure, homodimer.

Its subcellular location is the cytoplasm. The enzyme catalyses pseudouridine(1915) in 23S rRNA + S-adenosyl-L-methionine = N(3)-methylpseudouridine(1915) in 23S rRNA + S-adenosyl-L-homocysteine + H(+). In terms of biological role, specifically methylates the pseudouridine at position 1915 (m3Psi1915) in 23S rRNA. The polypeptide is Ribosomal RNA large subunit methyltransferase H (Methylococcus capsulatus (strain ATCC 33009 / NCIMB 11132 / Bath)).